We begin with the raw amino-acid sequence, 291 residues long: 2-C-methyl-D-erythritol 4-phosphate cytidylyltransferase (291 aa).

Residues 1-23 (MTERDFDTPVETPTVQPAPAQGA) form a disordered region.

Belongs to the IspD/TarI cytidylyltransferase family. IspD subfamily.

It catalyses the reaction 2-C-methyl-D-erythritol 4-phosphate + CTP + H(+) = 4-CDP-2-C-methyl-D-erythritol + diphosphate. Its pathway is isoprenoid biosynthesis; isopentenyl diphosphate biosynthesis via DXP pathway; isopentenyl diphosphate from 1-deoxy-D-xylulose 5-phosphate: step 2/6. Its function is as follows. Catalyzes the formation of 4-diphosphocytidyl-2-C-methyl-D-erythritol from CTP and 2-C-methyl-D-erythritol 4-phosphate (MEP). The protein is 2-C-methyl-D-erythritol 4-phosphate cytidylyltransferase of Bifidobacterium longum (strain DJO10A).